The primary structure comprises 585 residues: Putative sulfur deprivation response regulator (585 aa).

Transmembrane regions (helical) follow at residues 5–25 (VVDADVCLFAASTLLLLRGII), 30–50 (AFAGLANDSIVSIALMMMIAA), 83–103 (VASVSAVMNNTPLVAVMIPVV), 117–137 (FMMPLSYSAILGGLCTIIGTS), and 162–182 (IIGLPLTVAGGIYVVLFSPLL). 2 RCK C-terminal domains span residues 189 to 274 (MMAA…LPGL) and 288 to 372 (ETVA…STEW). 5 helical membrane-spanning segments follow: residues 389–409 (LALFMSLGIFIALIVLNSMDV), 411–431 (PLSTTALVCLFAYLITGVLTV), 442–462 (ILLTVAGGFGVAKAMTVTGLA), 482–502 (VAAIYASTSLLTALLSNGAAV), and 561–581 (FGLPLQFVAALITVPICVLYF).

This sequence belongs to the CitM (TC 2.A.11) transporter family.

It is found in the membrane. Its function is as follows. Not known; mutations in SAC1 produces cells that cannot synthesize arylsulfatase and cannot take up sulfate as rapidly as wild-type cells. SAC1 is necessary for cells to survive sulfur deprivation. This is Putative sulfur deprivation response regulator (SAC1) from Chlamydomonas reinhardtii (Chlamydomonas smithii).